The sequence spans 140 residues: Nucleoside diphosphate kinase (140 aa).

ATP contacts are provided by Lys11, Phe59, Arg87, Thr93, Arg104, and Asn114. The active-site Pros-phosphohistidine intermediate is His117.

It belongs to the NDK family. In terms of assembly, homotetramer. The cofactor is Mg(2+).

It is found in the cytoplasm. The catalysed reaction is a 2'-deoxyribonucleoside 5'-diphosphate + ATP = a 2'-deoxyribonucleoside 5'-triphosphate + ADP. The enzyme catalyses a ribonucleoside 5'-diphosphate + ATP = a ribonucleoside 5'-triphosphate + ADP. Functionally, major role in the synthesis of nucleoside triphosphates other than ATP. The ATP gamma phosphate is transferred to the NDP beta phosphate via a ping-pong mechanism, using a phosphorylated active-site intermediate. This Granulibacter bethesdensis (strain ATCC BAA-1260 / CGDNIH1) protein is Nucleoside diphosphate kinase.